The following is a 172-amino-acid chain: Adenine phosphoribosyltransferase (172 aa).

The protein belongs to the purine/pyrimidine phosphoribosyltransferase family. As to quaternary structure, homodimer.

It localises to the cytoplasm. It catalyses the reaction AMP + diphosphate = 5-phospho-alpha-D-ribose 1-diphosphate + adenine. Its pathway is purine metabolism; AMP biosynthesis via salvage pathway; AMP from adenine: step 1/1. Functionally, catalyzes a salvage reaction resulting in the formation of AMP, that is energically less costly than de novo synthesis. The protein is Adenine phosphoribosyltransferase of Synechocystis sp. (strain ATCC 27184 / PCC 6803 / Kazusa).